Consider the following 407-residue polypeptide: Probable tRNA sulfurtransferase (407 aa).

Residues 61 to 165 (NEIIQRLSKV…MDAIYIYEKV (105 aa)) enclose the THUMP domain. ATP-binding positions include 183–184 (ML), 208–209 (HF), Arg265, Gly287, and Gln296.

It belongs to the ThiI family.

It localises to the cytoplasm. The catalysed reaction is [ThiI sulfur-carrier protein]-S-sulfanyl-L-cysteine + a uridine in tRNA + 2 reduced [2Fe-2S]-[ferredoxin] + ATP + H(+) = [ThiI sulfur-carrier protein]-L-cysteine + a 4-thiouridine in tRNA + 2 oxidized [2Fe-2S]-[ferredoxin] + AMP + diphosphate. The enzyme catalyses [ThiS sulfur-carrier protein]-C-terminal Gly-Gly-AMP + S-sulfanyl-L-cysteinyl-[cysteine desulfurase] + AH2 = [ThiS sulfur-carrier protein]-C-terminal-Gly-aminoethanethioate + L-cysteinyl-[cysteine desulfurase] + A + AMP + 2 H(+). Its pathway is cofactor biosynthesis; thiamine diphosphate biosynthesis. Catalyzes the ATP-dependent transfer of a sulfur to tRNA to produce 4-thiouridine in position 8 of tRNAs, which functions as a near-UV photosensor. Also catalyzes the transfer of sulfur to the sulfur carrier protein ThiS, forming ThiS-thiocarboxylate. This is a step in the synthesis of thiazole, in the thiamine biosynthesis pathway. The sulfur is donated as persulfide by IscS. The sequence is that of Probable tRNA sulfurtransferase from Staphylococcus epidermidis (strain ATCC 35984 / DSM 28319 / BCRC 17069 / CCUG 31568 / BM 3577 / RP62A).